The following is a 208-amino-acid chain: Outer-membrane lipoprotein carrier protein (208 aa).

The N-terminal stretch at 1–21 is a signal peptide; it reads MRLIRTLFVAALAMGASLAHA.

It belongs to the LolA family. In terms of assembly, monomer.

The protein resides in the periplasm. Functionally, participates in the translocation of lipoproteins from the inner membrane to the outer membrane. Only forms a complex with a lipoprotein if the residue after the N-terminal Cys is not an aspartate (The Asp acts as a targeting signal to indicate that the lipoprotein should stay in the inner membrane). This is Outer-membrane lipoprotein carrier protein from Pseudomonas aeruginosa (strain UCBPP-PA14).